A 124-amino-acid polypeptide reads, in one-letter code: Urotensin-2 (124 aa).

The N-terminal stretch at 1-20 (MYKLASCCLLFIGFLNPLLS) is a signal peptide. Residues 21–110 (LPLLDSREIS…HLLARIWKPY (90 aa)) constitute a propeptide that is removed on maturation. A disulfide bridge connects residues Cys118 and Cys123.

This sequence belongs to the urotensin-2 family. Brain specific.

Its subcellular location is the secreted. Highly potent vasoconstrictor. This chain is Urotensin-2 (UTS2), found in Homo sapiens (Human).